Consider the following 119-residue polypeptide: Fluoride-specific ion channel FluC (119 aa).

Transmembrane regions (helical) follow at residues 5–25, 30–50, 59–79, and 92–112; these read IIPL…LNLA, LSPA…IGIF, WKLL…GFSL, and SALA…WLGL. Positions 69 and 72 each coordinate Na(+).

Belongs to the fluoride channel Fluc/FEX (TC 1.A.43) family.

It is found in the cell inner membrane. The catalysed reaction is fluoride(in) = fluoride(out). With respect to regulation, na(+) is not transported, but it plays an essential structural role and its presence is essential for fluoride channel function. Functionally, fluoride-specific ion channel. Important for reducing fluoride concentration in the cell, thus reducing its toxicity. This Neisseria meningitidis serogroup A / serotype 4A (strain DSM 15465 / Z2491) protein is Fluoride-specific ion channel FluC.